Reading from the N-terminus, the 314-residue chain is Galectin-12 (314 aa).

Galectin domains lie at 27-161 (YGTT…VGFL) and 190-314 (CSRA…CVHC).

The protein localises to the nucleus. In terms of biological role, binds lactose. May participate in the apoptosis of adipocytes. The polypeptide is Galectin-12 (Lgals12) (Mus musculus (Mouse)).